Reading from the N-terminus, the 344-residue chain is Glycerol-3-phosphate dehydrogenase [NAD(P)+] (344 aa).

Residues Ser18, Tyr19, His39, and Lys113 each coordinate NADPH. Sn-glycerol 3-phosphate is bound by residues Lys113, Gly142, and Thr144. Ala146 lines the NADPH pocket. Sn-glycerol 3-phosphate is bound by residues Lys198, Asp251, Ser261, Arg262, and Asn263. The active-site Proton acceptor is Lys198. An NADPH-binding site is contributed by Arg262. The NADPH site is built by Ile286 and Glu288.

It belongs to the NAD-dependent glycerol-3-phosphate dehydrogenase family.

It is found in the cytoplasm. The enzyme catalyses sn-glycerol 3-phosphate + NAD(+) = dihydroxyacetone phosphate + NADH + H(+). The catalysed reaction is sn-glycerol 3-phosphate + NADP(+) = dihydroxyacetone phosphate + NADPH + H(+). It functions in the pathway membrane lipid metabolism; glycerophospholipid metabolism. Catalyzes the reduction of the glycolytic intermediate dihydroxyacetone phosphate (DHAP) to sn-glycerol 3-phosphate (G3P), the key precursor for phospholipid synthesis. This is Glycerol-3-phosphate dehydrogenase [NAD(P)+] from Blochmanniella pennsylvanica (strain BPEN).